The chain runs to 360 residues: Alpha-2-macroglobulin receptor-associated protein (360 aa).

The first 33 residues, 1-33 (MAPLRDRVSTLPRLQLLVLLLLPLLLVPQPIAG), serve as a signal peptide directing secretion. A phosphoserine mark is found at S53 and S138. A coiled-coil region spans residues 222-302 (SKHSELKDRL…KHNHYQKQLE (81 aa)). The tract at residues 240–356 (RLRKVSHQGY…DLSSRVSRAR (117 aa)) is LDL receptor binding. N271 carries N-linked (GlcNAc...) asparagine glycosylation. A Prevents secretion from ER motif is present at residues 357 to 360 (HNEL).

This sequence belongs to the alpha-2-MRAP family. As to quaternary structure, interacts with the LRP1/alpha-2-macroglobulin receptor heavy and light chains; the interaction is transient and coincides with a reduction of ligand binding by the receptor. Interacts with LRP2/glycoprotein 330. Interacts with LRP1B; binding is followed by internalization and degradation. Interacts with LDLR. Interacts with SORL1. Interacts with LRP1; this interaction is followed by rapid internalization. In terms of processing, N-glycosylated.

Its subcellular location is the rough endoplasmic reticulum lumen. It is found in the endoplasmic reticulum-Golgi intermediate compartment lumen. The protein localises to the golgi apparatus. The protein resides in the cis-Golgi network. It localises to the golgi apparatus lumen. Its subcellular location is the endosome lumen. It is found in the cell surface. Its function is as follows. Molecular chaperone for LDL receptor-related proteins that may regulate their ligand binding activity along the secretory pathway. The protein is Alpha-2-macroglobulin receptor-associated protein (Lrpap1) of Rattus norvegicus (Rat).